The primary structure comprises 441 residues: Collagen alpha-1(XXVI) chain (441 aa).

A signal peptide spans 1–20; that stretch reads MKLALLLPWACCCLCGSALA. One can recognise an EMI domain in the interval 52-128; it reads RRHWCHHTVT…PGFTGSNCDE (77 aa). 3 cysteine pairs are disulfide-bonded: cysteine 56-cysteine 118, cysteine 83-cysteine 89, and cysteine 117-cysteine 126. An N-linked (GlcNAc...) asparagine glycan is attached at asparagine 70. Asparagine 132 carries an N-linked (GlcNAc...) asparagine glycan. Disordered regions lie at residues 156–362 and 390–441; these read AERP…AEGE and PLAS…SSRK. Collagen-like domains lie at 199–267 and 302–355; these read GPAG…PGPS and GVPG…EGEK. 4 stretches are compositionally biased toward pro residues: residues 200 to 215, 231 to 243, 252 to 269, and 306 to 327; these read PAGPPGQTGPPGPAGP, AGPPGLLGPPGPR, PGPPGPPGPAGNPGPSPN, and PRGPPGPPGPPGPRGPPGPPGT. Residues 348–357 are compositionally biased toward basic and acidic residues; sequence VKGEEGEKAA.

Homotrimer or heterotrimer. Post-translationally, hydroxylated on proline residues.

The protein resides in the secreted. The protein localises to the extracellular space. It localises to the extracellular matrix. This chain is Collagen alpha-1(XXVI) chain (COL26A1), found in Homo sapiens (Human).